The chain runs to 375 residues: Succinyl-diaminopimelate desuccinylase (375 aa).

H66 is a Zn(2+) binding site. D68 is an active-site residue. D99 provides a ligand contact to Zn(2+). E133 (proton acceptor) is an active-site residue. Zn(2+) contacts are provided by E134, E162, and H348.

The protein belongs to the peptidase M20A family. DapE subfamily. Homodimer. The cofactor is Zn(2+). Co(2+) is required as a cofactor.

It carries out the reaction N-succinyl-(2S,6S)-2,6-diaminopimelate + H2O = (2S,6S)-2,6-diaminopimelate + succinate. It participates in amino-acid biosynthesis; L-lysine biosynthesis via DAP pathway; LL-2,6-diaminopimelate from (S)-tetrahydrodipicolinate (succinylase route): step 3/3. In terms of biological role, catalyzes the hydrolysis of N-succinyl-L,L-diaminopimelic acid (SDAP), forming succinate and LL-2,6-diaminopimelate (DAP), an intermediate involved in the bacterial biosynthesis of lysine and meso-diaminopimelic acid, an essential component of bacterial cell walls. The chain is Succinyl-diaminopimelate desuccinylase from Buchnera aphidicola subsp. Acyrthosiphon pisum (strain 5A).